Here is a 517-residue protein sequence, read N- to C-terminus: Squalene epoxidase 6 (517 aa).

2 helical membrane passes run 3-23 (FTHV…VFYL) and 45-65 (AADV…YALA). FAD contacts are provided by residues 55 to 56 (VG), 75 to 76 (ER), arginine 83, phenylalanine 88, arginine 156, valine 172, aspartate 336, and methionine 349. The helical transmembrane segment at 447–467 (LVYHLCAITLSSIGQLLSPFP) threads the bilayer.

It belongs to the squalene monooxygenase family. Requires FAD as cofactor. In terms of tissue distribution, expressed in seedlings, leaves, stems, inflorescences and siliques.

The protein resides in the membrane. It carries out the reaction squalene + reduced [NADPH--hemoprotein reductase] + O2 = (S)-2,3-epoxysqualene + oxidized [NADPH--hemoprotein reductase] + H2O + H(+). Its pathway is terpene metabolism; lanosterol biosynthesis; lanosterol from farnesyl diphosphate: step 2/3. Catalyzes the stereospecific oxidation of squalene to (S)-2,3-epoxysqualene, and is considered to be a rate-limiting enzyme in steroid biosynthesis. This chain is Squalene epoxidase 6 (SQE6), found in Arabidopsis thaliana (Mouse-ear cress).